Consider the following 516-residue polypeptide: Probable serine/threonine-protein kinase WNK3 (516 aa).

In terms of domain architecture, Protein kinase spans 22–280; the sequence is GRYKEVLGKG…AKELLDDPFL (259 aa). Residues 102–105 and Lys152 each bind ATP; that span reads TEVF. Asp169 (proton acceptor) is an active-site residue. The disordered stretch occupies residues 426 to 451; it reads SSPKAGAGDSRSPFAPRSNSKLSSAQ. The segment covering 442–451 has biased composition (polar residues); the sequence is RSNSKLSSAQ. Positions 457–490 form a coiled coil; it reads EVGVIVEKLESLLRKQREEIEEMQRDQERIVTEF.

It belongs to the protein kinase superfamily. Ser/Thr protein kinase family. WNK subfamily.

It carries out the reaction L-seryl-[protein] + ATP = O-phospho-L-seryl-[protein] + ADP + H(+). The enzyme catalyses L-threonyl-[protein] + ATP = O-phospho-L-threonyl-[protein] + ADP + H(+). Functionally, may regulate flowering time by modulating the photoperiod pathway. This is Probable serine/threonine-protein kinase WNK3 (WNK3) from Arabidopsis thaliana (Mouse-ear cress).